The following is a 254-amino-acid chain: Alcohol dehydrogenase (254 aa).

NAD(+) is bound at residue 10–33 (FVAGLGGIGLDTSREIVKSGPKNL). Residue S138 coordinates substrate. Catalysis depends on Y151, which acts as the Proton acceptor.

The protein belongs to the short-chain dehydrogenases/reductases (SDR) family. Homodimer.

The enzyme catalyses a primary alcohol + NAD(+) = an aldehyde + NADH + H(+). It catalyses the reaction a secondary alcohol + NAD(+) = a ketone + NADH + H(+). The protein is Alcohol dehydrogenase (Adh) of Drosophila planitibia (Fruit fly).